The primary structure comprises 461 residues: E3 ubiquitin-protein ligase TRIM15 (461 aa).

The RING-type zinc finger occupies Cys12–Gln57. The B box-type zinc finger occupies Leu74–Leu115. Residues Cys79, His82, Cys101, and His107 each contribute to the Zn(2+) site. A coiled-coil region spans residues Arg123–Leu230. Residues Glu272–Gly461 form the B30.2/SPRY domain.

It belongs to the TRIM/RBCC family. Interacts with paxillin/PXN; this interaction recruits TRIM15 to focal adhesions. Interacts with TRIM8; this interaction prevents TRIM8 cytoplasmic translocation.

It localises to the cytoplasm. The protein localises to the nucleus. It is found in the cell junction. Its subcellular location is the focal adhesion. The enzyme catalyses S-ubiquitinyl-[E2 ubiquitin-conjugating enzyme]-L-cysteine + [acceptor protein]-L-lysine = [E2 ubiquitin-conjugating enzyme]-L-cysteine + N(6)-ubiquitinyl-[acceptor protein]-L-lysine.. Functionally, E3 ubiquitin ligase that plays a role in several processes including innate antiviral immnity, cell migration and chemotaxis. Acts as a 'Lys-63'-specific ubiquitin ligase for MAPK1/ERK2 and MAPK3/ERK1, promoting their activation by facilitating their interaction with MAP2K1 and MAP2K2. Also plays a role in cell migration and chemotaxis by acting as a stable focal adhesion component upon recruitment by multi-adapter protein paxillin/PXN. Functions in the RIGI-mediated interferon induction pathway upstream or at the level of MAVS. Inhibits NF-kappa-B activation by turnover of 'Lys-63'-linked ubiquitination of MAP3K7/TAK1. Mechanistically, prevents TRIM8 cytoplasmic translocation and thus inhibits TRIM8-mediated 'Lys-63'-linked polyubiquitination of MAP3K7/TAK1 in the cytoplasm. Also has an important regulatory effect on the activation of hepatic stellate cells (HSCs). The chain is E3 ubiquitin-protein ligase TRIM15 (TRIM15) from Sus scrofa (Pig).